The chain runs to 141 residues: Nucleoside triphosphatase NudI (141 aa).

The region spanning 1-141 is the Nudix hydrolase domain; that stretch reads MRQRTIVCPL…RHTLALKGLL (141 aa). Positions 38–59 match the Nudix box motif; that stretch reads GGVEPGERIEEALRREIREELG.

The protein belongs to the Nudix hydrolase family. NudI subfamily. Monomer. It depends on Mg(2+) as a cofactor.

The catalysed reaction is a ribonucleoside 5'-triphosphate + H2O = a ribonucleoside 5'-phosphate + diphosphate + H(+). It catalyses the reaction a 2'-deoxyribonucleoside 5'-triphosphate + H2O = a 2'-deoxyribonucleoside 5'-phosphate + diphosphate + H(+). It carries out the reaction dUTP + H2O = dUMP + diphosphate + H(+). The enzyme catalyses dTTP + H2O = dTMP + diphosphate + H(+). The catalysed reaction is dCTP + H2O = dCMP + diphosphate + H(+). Its function is as follows. Catalyzes the hydrolysis of nucleoside triphosphates, with a preference for pyrimidine deoxynucleoside triphosphates (dUTP, dTTP and dCTP). The protein is Nucleoside triphosphatase NudI of Salmonella heidelberg (strain SL476).